The sequence spans 735 residues: Translation initiation factor IF-2, chloroplastic (735 aa).

Positions 239-411 constitute a tr-type G domain; the sequence is RRAPIVTILG…ILLMADIENY (173 aa). The segment at 248-255 is G1; it reads GHVDHGKT. 248–255 serves as a coordination point for GTP; that stretch reads GHVDHGKT. Positions 273–277 are G2; that stretch reads GITQK. The tract at residues 298 to 301 is G3; that stretch reads DTPG. GTP-binding positions include 298–302 and 352–355; these read DTPGH and NKID. A G4 region spans residues 352–355; sequence NKID. The interval 388-390 is G5; it reads SAS.

Belongs to the TRAFAC class translation factor GTPase superfamily. Classic translation factor GTPase family. IF-2 subfamily.

The protein localises to the plastid. It localises to the chloroplast. In terms of biological role, one of the essential components for the initiation of protein synthesis. Protects formylmethionyl-tRNA from spontaneous hydrolysis and promotes its binding to the 30S ribosomal subunits. Also involved in the hydrolysis of GTP during the formation of the 70S ribosomal complex. The chain is Translation initiation factor IF-2, chloroplastic (infB) from Guillardia theta (Cryptophyte).